A 147-amino-acid polypeptide reads, in one-letter code: MGFRDICYRKHHKKLKQFQKVEIKVKMDCEGCERRVRKSVEGMKGVSKVTVDPKQSKLTVEGFVQPSKVVHRVMHRTGKKAELWPYVPYEVVPHPYAPGAYDKKAPPGYVRNALADPLVAPLARASSFEVKYTSAFSDDNPNACTIM.

Residues 18–82 (FQKVEIKVKM…VMHRTGKKAE (65 aa)) enclose the HMA domain. The a metal cation site is built by Cys29 and Cys32. Cys144 carries the post-translational modification Cysteine methyl ester. Cys144 is lipidated: S-farnesyl cysteine. Positions 145–147 (TIM) are cleaved as a propeptide — removed in mature form.

It belongs to the HIPP family. Interacts with UBP16. Interacts with ZHD11/HB29.

The protein resides in the membrane. Heavy-metal-binding protein. Binds cadmium. May be involved in cadmium transport and play a role in cadmium detoxification. The chain is Heavy metal-associated isoprenylated plant protein 27 from Arabidopsis thaliana (Mouse-ear cress).